Reading from the N-terminus, the 125-residue chain is Ribosome-binding factor A (125 aa).

It belongs to the RbfA family. In terms of assembly, monomer. Binds 30S ribosomal subunits, but not 50S ribosomal subunits or 70S ribosomes.

Its subcellular location is the cytoplasm. One of several proteins that assist in the late maturation steps of the functional core of the 30S ribosomal subunit. Associates with free 30S ribosomal subunits (but not with 30S subunits that are part of 70S ribosomes or polysomes). Required for efficient processing of 16S rRNA. May interact with the 5'-terminal helix region of 16S rRNA. This chain is Ribosome-binding factor A, found in Acidovorax sp. (strain JS42).